Here is a 373-residue protein sequence, read N- to C-terminus: Anhydro-N-acetylmuramic acid kinase (373 aa).

12-19 (GTSLDGVD) contributes to the ATP binding site.

It belongs to the anhydro-N-acetylmuramic acid kinase family.

It catalyses the reaction 1,6-anhydro-N-acetyl-beta-muramate + ATP + H2O = N-acetyl-D-muramate 6-phosphate + ADP + H(+). It functions in the pathway amino-sugar metabolism; 1,6-anhydro-N-acetylmuramate degradation. Its pathway is cell wall biogenesis; peptidoglycan recycling. In terms of biological role, catalyzes the specific phosphorylation of 1,6-anhydro-N-acetylmuramic acid (anhMurNAc) with the simultaneous cleavage of the 1,6-anhydro ring, generating MurNAc-6-P. Is required for the utilization of anhMurNAc either imported from the medium or derived from its own cell wall murein, and thus plays a role in cell wall recycling. The sequence is that of Anhydro-N-acetylmuramic acid kinase from Salmonella newport (strain SL254).